We begin with the raw amino-acid sequence, 279 residues long: Thymidylate synthase (279 aa).

133–134 (RR) provides a ligand contact to dUMP. The active-site Nucleophile is cysteine 154. Residues 178–181 (RSND), asparagine 189, and 219–221 (HIY) each bind dUMP. A (6R)-5,10-methylene-5,6,7,8-tetrahydrofolate-binding site is contributed by aspartate 181. Residue alanine 278 participates in (6R)-5,10-methylene-5,6,7,8-tetrahydrofolate binding.

It belongs to the thymidylate synthase family. Bacterial-type ThyA subfamily. Homodimer.

It is found in the cytoplasm. The catalysed reaction is dUMP + (6R)-5,10-methylene-5,6,7,8-tetrahydrofolate = 7,8-dihydrofolate + dTMP. Its pathway is pyrimidine metabolism; dTTP biosynthesis. Catalyzes the reductive methylation of 2'-deoxyuridine-5'-monophosphate (dUMP) to 2'-deoxythymidine-5'-monophosphate (dTMP) while utilizing 5,10-methylenetetrahydrofolate (mTHF) as the methyl donor and reductant in the reaction, yielding dihydrofolate (DHF) as a by-product. This enzymatic reaction provides an intracellular de novo source of dTMP, an essential precursor for DNA biosynthesis. The chain is Thymidylate synthase from Streptococcus pyogenes serotype M12 (strain MGAS2096).